A 308-amino-acid chain; its full sequence is Mitochondrial import receptor subunit TOM40B (308 aa).

The disordered stretch occupies residues 1-29 (MGNTLGLAPMGTLPRRSHRREEPLPNPGS). Positions 281–308 (PLPVTLALGAFLNHWRNRFHCGFSITVG) are required for mitochondrial targeting.

Belongs to the Tom40 family. In terms of assembly, forms part of the preprotein translocase of the outer mitochondrial membrane (TOM complex) containing TOMM22, TOMM40, TOMM40L and TOMM70. Interacts with mitochondrial targeting sequences.

The protein localises to the mitochondrion outer membrane. Its function is as follows. Potential channel-forming protein implicated in import of protein precursors into mitochondria. The sequence is that of Mitochondrial import receptor subunit TOM40B (Tomm40l) from Mus musculus (Mouse).